The chain runs to 92 residues: Small ribosomal subunit protein bS20 (92 aa).

Positions 1 to 23 are disordered; that stretch reads MANTPSAKKRAKQAEKRRSHNAS. The segment covering 7-20 has biased composition (basic residues); sequence AKKRAKQAEKRRSH.

It belongs to the bacterial ribosomal protein bS20 family.

Functionally, binds directly to 16S ribosomal RNA. This Pseudomonas savastanoi pv. phaseolicola (strain 1448A / Race 6) (Pseudomonas syringae pv. phaseolicola (strain 1448A / Race 6)) protein is Small ribosomal subunit protein bS20.